Consider the following 475-residue polypeptide: 7-dehydrocholesterol reductase (475 aa).

The disordered stretch occupies residues 1 to 21 (MAAKSQPSAPKTKSTSGLTNG). S14 carries the phosphoserine modification. The next 6 membrane-spanning stretches (helical) occupy residues 40-60 (LASV…FIMA), 151-173 (WLLT…PTII), 178-200 (IPLL…VKGY), 266-286 (VTNS…DFFW), 306-326 (LGWG…LYLV), and 331-351 (QLPT…YYIF). NADP(+) is bound by residues K358, R362, L395, W400, and 407 to 408 (NY). A helical membrane pass occupies residues 420 to 440 (LACGGGHLLPYFYIIFMAILL). NADP(+) is bound by residues D447, 451-455 (CANKY), and Y462.

Belongs to the ERG4/ERG24 family. Interacts with DHCR24; this interaction regulates DHCR7 activity. Interacts with TMEM147.

It is found in the endoplasmic reticulum membrane. It carries out the reaction cholesterol + NADP(+) = 7-dehydrocholesterol + NADPH + H(+). The catalysed reaction is 7-dehydrodesmosterol + NADPH + H(+) = desmosterol + NADP(+). The enzyme catalyses 5,6alpha-epoxy-5alpha-cholestan-3beta-ol + H2O = 5alpha-cholestane-3beta,5,6beta-triol. It catalyses the reaction 5,6beta-epoxy-5beta-cholestan-3beta-ol + H2O = 5alpha-cholestane-3beta,5,6beta-triol. It participates in steroid biosynthesis; cholesterol biosynthesis. Functionally, oxidoreductase that catalyzes the last step of the cholesterol synthesis pathway, which transforms cholesta-5,7-dien-3beta-ol (7-dehydrocholesterol,7-DHC) into cholesterol by reducing the C7-C8 double bond of its sterol core. Can also metabolize cholesta-5,7,24-trien-3beta-ol (7-dehydrodemosterol, 7-DHD) to desmosterol, which is then metabolized by the Delta(24)-sterol reductase (DHCR24) to cholesterol. Modulates ferroptosis (a form of regulated cell death driven by iron-dependent lipid peroxidation) through the metabolic breakdown of the anti-ferroptotic metabolites 7-DHC and 7-DHD which, when accumulated, divert the propagation of peroxyl radical-mediated damage from phospholipid components to its sterol core, protecting plasma and mitochondrial membranes from phospholipid autoxidation. Component of the microsomal antiestrogen binding site (AEBS), a multiproteic complex at the ER membrane that consists of an association between cholestenol Delta-isomerase/EBP and DHCR7. This complex is responsible for cholesterol-5,6-epoxide hydrolase (ChEH) activity, which consists in the hydration of cholesterol-5,6-epoxides (5,6-EC) into cholestane-3beta,5alpha,6beta-triol (CT). The precise role of each component of this complex has not been described yet. The chain is 7-dehydrocholesterol reductase (DHCR7) from Bos taurus (Bovine).